The following is a 657-amino-acid chain: N-acetylgalactosaminyltransferase 7 (657 aa).

Residues 1–6 lie on the Cytoplasmic side of the membrane; the sequence is MRLKIG. A helical; Signal-anchor for type II membrane protein transmembrane segment spans residues 7–29; the sequence is FILRSLLVVGSFLGLVVLWSSLS. Disordered regions lie at residues 30–66 and 83–105; these read SRPD…DDRF and ESIR…DSQR. The Lumenal portion of the chain corresponds to 30–657; the sequence is SRPDDQSPLS…KWEMNNIHSV (628 aa). 5 disulfides stabilise this stretch: Cys-197/Cys-435, Cys-426/Cys-507, Cys-545/Cys-562, Cys-585/Cys-600, and Cys-625/Cys-640. The interval 206–317 is catalytic subdomain A; that stretch reads LLTSSVVIVF…VNWYAPLVAP (112 aa). Substrate-binding residues include Asp-247 and Arg-277. Mn(2+) contacts are provided by Asp-301 and His-303. The catalytic subdomain B stretch occupies residues 381-443; that stretch reads PYRSPAMAGG…PCSRVGHIYR (63 aa). Trp-412 provides a ligand contact to substrate. Residue His-440 coordinates Mn(2+). Arg-443 serves as a coordination point for substrate. Residues 532–652 enclose the Ricin B-type lectin domain; that stretch reads VEWGEIRGLE…SKMTQKWEMN (121 aa).

The protein belongs to the glycosyltransferase 2 family. GalNAc-T subfamily. It depends on Mn(2+) as a cofactor. As to expression, highly expressed in sublingual gland. Expressed at lower level in stomach, small intestiine and colon.

It is found in the golgi apparatus membrane. It carries out the reaction L-seryl-[protein] + UDP-N-acetyl-alpha-D-galactosamine = a 3-O-[N-acetyl-alpha-D-galactosaminyl]-L-seryl-[protein] + UDP + H(+). It catalyses the reaction L-threonyl-[protein] + UDP-N-acetyl-alpha-D-galactosamine = a 3-O-[N-acetyl-alpha-D-galactosaminyl]-L-threonyl-[protein] + UDP + H(+). It functions in the pathway protein modification; protein glycosylation. In terms of biological role, glycopeptide transferase involved in O-linked oligosaccharide biosynthesis, which catalyzes the transfer of an N-acetyl-D-galactosamine residue to an already glycosylated peptide. In contrast to other proteins of the family, it does not act as a peptide transferase that transfers GalNAc onto serine or threonine residue on the protein receptor, but instead requires the prior addition of a GalNAc on a peptide before adding additional GalNAc moieties. Some peptide transferase activity is however not excluded, considering that its appropriate peptide substrate may remain unidentified. In Mus musculus (Mouse), this protein is N-acetylgalactosaminyltransferase 7 (Galnt7).